The following is a 152-amino-acid chain: Proteolipid protein 2 (152 aa).

One can recognise an MARVEL domain in the interval 19–137 (FSRTRKGILL…DAYFTFPLRQ (119 aa)). 3 consecutive transmembrane segments (helical) span residues 25 to 45 (GILLLAEIILCLVILICFSAG), 48 to 68 (GYSSLSVVEMVLAIVFFVIYM), and 85 to 105 (FFRTLIAAILYLITSIFVLVE). N108 carries an N-linked (GlcNAc...) asparagine glycan. A helical transmembrane segment spans residues 112–132 (IAAGVLGLLATCLFGYDAYFT).

The protein resides in the membrane. In terms of biological role, may play a role in cell differentiation in the intestinal epithelium. In Oryctolagus cuniculus (Rabbit), this protein is Proteolipid protein 2 (PLP2).